Consider the following 606-residue polypeptide: NADH-ubiquinone oxidoreductase chain 5 (606 aa).

Helical transmembrane passes span 3-23 (VINL…LPIT), 38-58 (ITKM…LLFL), 87-107 (FFSL…MEFS), 124-144 (LLLF…LQLF), 180-200 (IGDM…NSWE), 216-236 (LLGL…HPWL), 244-264 (TPVS…FTLI), 276-296 (IQTS…ICAL), 304-323 (IIAL…IGIN), 328-350 (AFTH…GSII), 369-389 (MPIT…MPFL), 404-424 (MSYI…MTAS), 460-480 (LILG…PHTT), 483-503 (MTMP…GFTV), and 586-606 (LMKL…LITL).

Belongs to the complex I subunit 5 family. As to quaternary structure, core subunit of respiratory chain NADH dehydrogenase (Complex I) which is composed of 45 different subunits.

The protein resides in the mitochondrion inner membrane. It carries out the reaction a ubiquinone + NADH + 5 H(+)(in) = a ubiquinol + NAD(+) + 4 H(+)(out). Its function is as follows. Core subunit of the mitochondrial membrane respiratory chain NADH dehydrogenase (Complex I) which catalyzes electron transfer from NADH through the respiratory chain, using ubiquinone as an electron acceptor. Essential for the catalytic activity and assembly of complex I. This Elephas maximus (Indian elephant) protein is NADH-ubiquinone oxidoreductase chain 5 (MT-ND5).